We begin with the raw amino-acid sequence, 258 residues long: Indole-3-glycerol phosphate synthase (258 aa).

The protein belongs to the TrpC family.

The catalysed reaction is 1-(2-carboxyphenylamino)-1-deoxy-D-ribulose 5-phosphate + H(+) = (1S,2R)-1-C-(indol-3-yl)glycerol 3-phosphate + CO2 + H2O. It functions in the pathway amino-acid biosynthesis; L-tryptophan biosynthesis; L-tryptophan from chorismate: step 4/5. The protein is Indole-3-glycerol phosphate synthase of Chlorobium phaeovibrioides (strain DSM 265 / 1930) (Prosthecochloris vibrioformis (strain DSM 265)).